A 72-amino-acid chain; its full sequence is Conotoxin VnMKLT2-011 (72 aa).

The N-terminal stretch at 1–23 (MMKLTCVLIIAVLFLTACQLTTA) is a signal peptide. Positions 24–42 (ETRDEYRAVRSSDEVRNSR) are excised as a propeptide. 3 disulfides stabilise this stretch: Cys-44–Cys-57, Cys-51–Cys-62, and Cys-56–Cys-71.

Belongs to the conotoxin O1 superfamily. As to expression, expressed by the venom duct.

It localises to the secreted. The sequence is that of Conotoxin VnMKLT2-011 from Conus ventricosus (Mediterranean cone).